The sequence spans 605 residues: DNA primase (605 aa).

The CHC2-type zinc-finger motif lies at 39-63 (CPFHHERTPSFHVVPDKKMYYCFGC). The 82-residue stretch at 257–338 (RAAIICEGYM…EVRIVELNGG (82 aa)) folds into the Toprim domain. Mg(2+) contacts are provided by glutamate 263, aspartate 307, and aspartate 309.

It belongs to the DnaG primase family. Monomer. Interacts with DnaB. The cofactor is Zn(2+). It depends on Mg(2+) as a cofactor.

The catalysed reaction is ssDNA + n NTP = ssDNA/pppN(pN)n-1 hybrid + (n-1) diphosphate.. Its function is as follows. RNA polymerase that catalyzes the synthesis of short RNA molecules used as primers for DNA polymerase during DNA replication. This chain is DNA primase, found in Treponema pallidum (strain Nichols).